The chain runs to 974 residues: Phosphoenolpyruvate carboxylase 1 (974 aa).

Active-site residues include His-164 and Lys-604.

This sequence belongs to the PEPCase type 1 family. As to quaternary structure, exists as a homotetramer or heterooligomer. Mg(2+) serves as cofactor.

It is found in the cytoplasm. It carries out the reaction oxaloacetate + phosphate = phosphoenolpyruvate + hydrogencarbonate. With respect to regulation, activated by glutamine and dihydroxyacetone phosphate. Inhibited by glutamate, aspartate, 2-oxoglutarate and malate. In terms of biological role, through the carboxylation of phosphoenolpyruvate (PEP) it forms oxaloacetate, a four-carbon dicarboxylic acid source for the tricarboxylic acid cycle. The chain is Phosphoenolpyruvate carboxylase 1 from Chlamydomonas reinhardtii (Chlamydomonas smithii).